A 1119-amino-acid chain; its full sequence is Transient receptor potential cation channel subfamily A member 1 (1119 aa).

Over 1–718 (MKRSLRKMWR…MKWLAYGFRA (718 aa)) the chain is Cytoplasmic. 16 ANK repeats span residues 62 to 92 (MDTFFLHYAAAEGQIELMEKITRDSSLEVLH), 97 to 126 (YGNTPLHCAVEKNQIESVKFLLSRGANPNL), 130 to 160 (NMMAPLHIAVQGMNNEVMKVLLEHRTIDVNL), 164 to 193 (NGNTAVIIACTTNNSEALQILLKKGAKPCK), 197 to 226 (WGCFPIHQAAFSGSKECMEIILRFGEEHGY), 238 to 267 (GKATPLHLAVQNGDLEMIKMCLDNGAQIDP), 271 to 301 (GRCTAIHFAATQGATEIVKLMISSYSGSVDI), 308 to 337 (CHETMLHRASLFDHHELADYLISVGADINK), 341 to 370 (EGRSPLILATASASWNIVNLLLSKGAQVDI), 374 to 403 (FGRNFLHLTVQQPYGLKNLRPEFMQMQQIK), 412 to 441 (DGCTPLHYACRQGGPGSVNNLLGFNVSIHS), 445 to 474 (DKKSPLHFAASYGRINTCQRLLQDISDTRL), 481 to 510 (HGMTPLHLAAKNGHDKVVQLLLKKGALFLS), 513 to 542 (NGWTALHHASMGGYTQTMKVILDTNLKCTD), 547 to 576 (DGNTALHFAAREGHAKAVALLLSHNADIVL), and 579 to 609 (QQASFLHLALHNKRKEVVLTIIRSKRWDECL). Disulfide bonds link cysteine 192–cysteine 665, cysteine 462–cysteine 665, cysteine 608–cysteine 621, cysteine 621–cysteine 665, and cysteine 633–cysteine 856. Proline 394 carries the post-translational modification 4-hydroxyproline; by EGLN1; transient; in normoxia and hyperoxia. Residues cysteine 414 and cysteine 421 each contribute to the (E)-cinnamaldehyde site. A (E)-cinnamaldehyde-binding site is contributed by cysteine 621. At cysteine 633 the chain carries Cysteine sulfenic acid (-SOH); transient; in hyperoxia. (E)-cinnamaldehyde contacts are provided by cysteine 641, cysteine 665, and lysine 710. The helical transmembrane segment at 719 to 739 (HMMNLGSYCLGLIPMTILVVN) threads the bilayer. The Extracellular portion of the chain corresponds to 740 to 767 (IKPGMAFNSTGIINETSDHSEILDTTNS). 2 N-linked (GlcNAc...) asparagine glycosylation sites follow: asparagine 747 and asparagine 753. The helical transmembrane segment at 768–793 (YLIKTCMILVFLSSIFGYCKEAGQIF) threads the bilayer. 2 residues coordinate Ca(2+): glutamate 788 and glutamine 791. Topologically, residues 794-798 (QQKRN) are cytoplasmic. A helical transmembrane segment spans residues 799-823 (YFMDISNVLEWIIYTTGIIFVLPLF). Ca(2+)-binding residues include asparagine 805 and glutamate 808. The Extracellular segment spans residues 824 to 829 (VEIPAH). Residues 830–850 (LQWQCGAIAVYFYWMNFLLYL) traverse the membrane as a helical segment. The Cytoplasmic portion of the chain corresponds to 851-862 (QRFENCGIFIVM). Residue cysteine 856 is modified to Cysteine sulfenic acid (-SOH); transient; in hyperoxia. A helical membrane pass occupies residues 863-892 (LEVILKTLLRSTVVFIFLLLAFGLSFYILL). Over 893 to 901 (NLQDPFSSP) the chain is Extracellular. An intramembrane region (pore-forming) is located at residues 902–922 (LLSIIQTFSMMLGDINYRESF). The Extracellular segment spans residues 923 to 933 (LEPYLRNELAH). Residues 934–960 (PVLSFAQLVSFTIFVPIVLMNLLIGLA) form a helical membrane-spanning segment. Topologically, residues 961–1119 (VGDIAEVQKH…VKAKTHHLEP (159 aa)) are cytoplasmic. The stretch at 1042 to 1071 (MEILKQKYRLKDLTFLLEKQHELIKLIIQK) forms a coiled coil. Residue 1046–1052 (KQKYRLK) participates in a 1,2-diacyl-sn-glycero-3-phospho-(1D-myo-inositol) binding.

This sequence belongs to the transient receptor (TC 1.A.4) family. In terms of assembly, homotetramer. Interacts with TMEM100. Interacts with EGLN1. Interacts with the scorpion wasabi receptor toxin at the same site that electrophiles but in a non-covalent manner. TRPA1 activation by electrophiles occurs though covalent modification of specific cysteine residues in the N-terminal cytoplasmic domain. In terms of processing, hydroxylation is required for TRPA1 activity inhibition in normoxia. In hypoxia, the decrease in oxygen concentration diminishes the activity of the hydroxylase EGLN1, thus relieving TRPA1 from inhibition and ultimately leading to channel activation. Post-translationally, oxidation of Cys-633 and Cys-856 in hyperoxia may override the hydroxylase EGLN1-mediated inhibition, causing TRPA1 activation.

It localises to the cell membrane. The enzyme catalyses Ca(2+)(in) = Ca(2+)(out). It catalyses the reaction Mg(2+)(in) = Mg(2+)(out). It carries out the reaction Na(+)(in) = Na(+)(out). The catalysed reaction is K(+)(in) = K(+)(out). The enzyme catalyses Zn(2+)(in) = Zn(2+)(out). With respect to regulation, electrophilic ligands activate the channel by covalent modification of intracellular cysteines; Cys-621 plays a key role in covalent binding of electrophiles. Extracellular Ca(2+) both potentiates and inactivates TRPA1; a rapid potentiation follows by slow desensitization. Activated by increase in intracellular Ca(2+) concentration. Inhibited by the potent blocker of TRPV channels ruthenium red, A-967079, AP-18, HC-030031, and aryl sulfonamide derivative (S)-N-(4-chlorobenzyl)-1-((4-fluorophenyl)sulfonyl)pyrrolidine-2-carboxamide (ASD). Activated by benzyl isothiocyanate (BITC), iodoacetamide, sulfhydryl reactive agent MTSEA, N-methyl maleimide (NMM), N-ethylmaleimide (NEM), and 2-aminoethyldiphenylborinate (2-APB). Also activated by hyperoxia. Acivated by intracellular Zn(2+). TRPA1 activation may critically depend on the presence of small intracellular compounds such as polyphosphates. Ligand-activated Ca(2+)-permeable, nonselective cation channel involved in pain detection and possibly also in cold perception, oxygen concentration perception, cough, itch, and inner ear function. Has a relatively high Ca(2+) selectivity, with a preference for divalent over monovalent cations (Ca(2+) &gt; Ba(2+) &gt; Mg(2+) &gt; NH4(+) &gt; Li(+) &gt; K(+)), the influx of cation into the cytoplasm leads to membrane depolarization. Has a central role in the pain response to endogenous inflammatory mediators, such as bradykinin and to a diverse array of irritants. Activated by a large variety of structurally unrelated electrophilic and non-electrophilic chemical compounds, such as allylthiocyanate (AITC) from mustard oil or wasabi, cinnamaldehyde, diallyl disulfide (DADS) from garlic, and acrolein, an environmental irritant. Electrophilic ligands activate TRPA1 by interacting with critical N-terminal Cys residues in a covalent manner. Non-electrophile agonists bind at distinct sites in the transmembrane domain to promote channel activation. Also acts as an ionotropic cannabinoid receptor by being activated by delta(9)-tetrahydrocannabinol (THC), the psychoactive component of marijuana. May be a component for the mechanosensitive transduction channel of hair cells in inner ear, thereby participating in the perception of sounds. This Homo sapiens (Human) protein is Transient receptor potential cation channel subfamily A member 1.